The following is a 153-amino-acid chain: Protein-export protein SecB (153 aa).

This sequence belongs to the SecB family. As to quaternary structure, homotetramer, a dimer of dimers. One homotetramer interacts with 1 SecA dimer.

It localises to the cytoplasm. Its function is as follows. One of the proteins required for the normal export of preproteins out of the cell cytoplasm. It is a molecular chaperone that binds to a subset of precursor proteins, maintaining them in a translocation-competent state. It also specifically binds to its receptor SecA. The sequence is that of Protein-export protein SecB from Edwardsiella ictaluri (strain 93-146).